A 264-amino-acid chain; its full sequence is NAD-capped RNA hydrolase NudC (264 aa).

Zn(2+)-binding residues include C99 and C102. Substrate is bound at residue E112. The Zn(2+) site is built by C117 and C120. Residue Y125 coordinates substrate. The 128-residue stretch at 126 to 253 folds into the Nudix hydrolase domain; that stretch reads PVICPSIIVA…TIARKLIHVT (128 aa). A divalent metal cation is bound by residues A162, E178, and E182. Residues 163–184 carry the Nudix box motif; the sequence is GFVEVGETFEQAVQREVFEETG. 196–203 contributes to the substrate binding site; that stretch reads QPWAFPNS. Residue E223 participates in a divalent metal cation binding. A246 contributes to the substrate binding site.

This sequence belongs to the Nudix hydrolase family. NudC subfamily. In terms of assembly, homodimer. Mg(2+) serves as cofactor. Requires Mn(2+) as cofactor. It depends on Zn(2+) as a cofactor.

The catalysed reaction is a 5'-end NAD(+)-phospho-ribonucleoside in mRNA + H2O = a 5'-end phospho-adenosine-phospho-ribonucleoside in mRNA + beta-nicotinamide D-ribonucleotide + 2 H(+). It carries out the reaction NAD(+) + H2O = beta-nicotinamide D-ribonucleotide + AMP + 2 H(+). The enzyme catalyses NADH + H2O = reduced beta-nicotinamide D-ribonucleotide + AMP + 2 H(+). MRNA decapping enzyme that specifically removes the nicotinamide adenine dinucleotide (NAD) cap from a subset of mRNAs by hydrolyzing the diphosphate linkage to produce nicotinamide mononucleotide (NMN) and 5' monophosphate mRNA. The NAD-cap is present at the 5'-end of some mRNAs and stabilizes RNA against 5'-processing. Has preference for mRNAs with a 5'-end purine. Catalyzes the hydrolysis of a broad range of dinucleotide pyrophosphates. The protein is NAD-capped RNA hydrolase NudC of Haemophilus influenzae (strain ATCC 51907 / DSM 11121 / KW20 / Rd).